A 309-amino-acid chain; its full sequence is Putative F-box protein At4g05475 (309 aa).

Positions 1–26 are disordered; that stretch reads MATSTTLQSLLMKEDEEQRNKRRTTS. The region spanning 37 to 84 is the F-box domain; the sequence is RINWVDLPPELTTSILLRLSVTDILDNARKLCRAWRRICKDPSMWRKI.

This chain is Putative F-box protein At4g05475, found in Arabidopsis thaliana (Mouse-ear cress).